The chain runs to 289 residues: BTB/POZ domain-containing protein KCTD7 (289 aa).

The disordered stretch occupies residues 1-40 (MVVVTGREPDSRRPDGAMSSSDAEDDFLEPATPTATQAGH). The region spanning 53-141 (VPLNIGGAHF…YAIGPLLEQL (89 aa)) is the BTB domain.

As to quaternary structure, interacts with CUL3.

The protein localises to the cell membrane. The protein resides in the cytoplasm. It localises to the cytosol. Functionally, may be involved in the control of excitability of cortical neurons. This chain is BTB/POZ domain-containing protein KCTD7 (KCTD7), found in Bos taurus (Bovine).